The primary structure comprises 222 residues: Glutathione S-transferase A5 (222 aa).

N-acetylalanine is present on A2. One can recognise a GST N-terminal domain in the interval 3-83 (EKPKLHYSNA…YIASKYNLYG (81 aa)). K4 carries the N6-succinyllysine modification. Glutathione contacts are provided by residues Y9, R45, 54-55 (QV), and 67-68 (QT). The GST C-terminal domain occupies 85–208 (DMKERALIDM…QPGSQRKPPM (124 aa)).

It belongs to the GST superfamily. Alpha family. Homodimer. Expression not detected.

It localises to the cytoplasm. The enzyme catalyses RX + glutathione = an S-substituted glutathione + a halide anion + H(+). This Homo sapiens (Human) protein is Glutathione S-transferase A5 (GSTA5).